A 430-amino-acid polypeptide reads, in one-letter code: Histidinol dehydrogenase (430 aa).

Residues Y131, Q192, and N215 each coordinate NAD(+). Residues S238, Q260, and H263 each coordinate substrate. 2 residues coordinate Zn(2+): Q260 and H263. Active-site proton acceptor residues include E328 and H329. 4 residues coordinate substrate: H329, D362, E416, and H421. Residue D362 coordinates Zn(2+). Residue H421 coordinates Zn(2+).

The protein belongs to the histidinol dehydrogenase family. Requires Zn(2+) as cofactor.

The enzyme catalyses L-histidinol + 2 NAD(+) + H2O = L-histidine + 2 NADH + 3 H(+). The protein operates within amino-acid biosynthesis; L-histidine biosynthesis; L-histidine from 5-phospho-alpha-D-ribose 1-diphosphate: step 9/9. Its function is as follows. Catalyzes the sequential NAD-dependent oxidations of L-histidinol to L-histidinaldehyde and then to L-histidine. This is Histidinol dehydrogenase from Acinetobacter baylyi (strain ATCC 33305 / BD413 / ADP1).